A 298-amino-acid polypeptide reads, in one-letter code: Cyclic dof factor 1 (298 aa).

The interval Glu-27–Thr-46 is disordered. The Dof-type zinc-finger motif lies at Leu-54–Asn-108. The Zn(2+) site is built by Cys-56, Cys-59, Cys-81, and Cys-84. Residues Ser-200–Lys-231 are disordered. Basic and acidic residues predominate over residues His-210–Lys-219.

As to quaternary structure, interacts with ADO2 (via kelch repeats), ADO3 (via kelch repeats) and GI (via N-terminus). In terms of processing, ubiquitinated. Expressed in the vascular tissues of cotyledons, leaves and hypocotyls and in stomata. Not detected in roots.

The protein localises to the nucleus. Transcription factor that binds specifically to a 5'-AA[AG]G-3' consensus core sequence. A flanking TGT sequence contributes to the specificity of binding. Regulates a photoperiodic flowering response. Transcriptional repressor of 'CONSTANS' expression. The DNA-binding ability is not modulated by 'GIGANTEA' but the stability of CDF1 is controlled by the proteasome-dependent pathway. Ubiquitinated by the SCF(ADO3) E3 ubiquitin ligase complex. Binds to the FT promoter in the morning. In Arabidopsis thaliana (Mouse-ear cress), this protein is Cyclic dof factor 1 (CDF1).